The sequence spans 163 residues: Adenosine 5'-monophosphoramidase HINT2 (163 aa).

The transit peptide at methionine 1–alanine 17 directs the protein to the mitochondrion. Residues isoleucine 55–glycine 163 enclose the HIT domain. Residues serine 63 and aspartate 80 each contribute to the AMP site. Residue lysine 119 is modified to N6-acetyllysine. Asparagine 136 is an AMP binding site. Lysine 139 bears the N6-acetyllysine mark. Residues alanine 142 to valine 145 and histidine 149 to histidine 151 contribute to the AMP site. The short motif at histidine 147–histidine 151 is the Histidine triad motif element. Histidine 149 serves as the catalytic Tele-AMP-histidine intermediate.

This sequence belongs to the HINT family. As to expression, high expression in liver and pancreas. Expression is significantly down-regulated in hepatocellular carcinoma (HCC) patients.

The protein localises to the mitochondrion. The catalysed reaction is adenosine 5'-phosphoramidate + H2O = AMP + NH4(+). In terms of biological role, exhibits adenosine 5'-monophosphoramidase activity, hydrolyzing purine nucleotide phosphoramidates with a single phosphate group such as adenosine 5'monophosphoramidate (AMP-NH2) to yield AMP and NH2. Hydrolyzes adenosine 5'-O-p-nitrophenylphosphoramidate (AMP-pNA). Hydrolyzes fluorogenic purine nucleoside tryptamine phosphoramidates in vitro. May be involved in steroid biosynthesis. May play a role in apoptosis. The chain is Adenosine 5'-monophosphoramidase HINT2 from Homo sapiens (Human).